Reading from the N-terminus, the 386-residue chain is Succinate--CoA ligase [ADP-forming] subunit beta (386 aa).

The region spanning 9–244 (KAVLRSYGVS…LDEEDSKEIE (236 aa)) is the ATP-grasp domain. ATP contacts are provided by residues Lys46, 53–55 (GRG), Glu99, Cys102, and Glu107. Mg(2+) is bound by residues Asn199 and Asp213. Residues Asn264 and 321-323 (GIM) each bind substrate.

The protein belongs to the succinate/malate CoA ligase beta subunit family. In terms of assembly, heterotetramer of two alpha and two beta subunits. Requires Mg(2+) as cofactor.

The catalysed reaction is succinate + ATP + CoA = succinyl-CoA + ADP + phosphate. It carries out the reaction GTP + succinate + CoA = succinyl-CoA + GDP + phosphate. Its pathway is carbohydrate metabolism; tricarboxylic acid cycle; succinate from succinyl-CoA (ligase route): step 1/1. Functionally, succinyl-CoA synthetase functions in the citric acid cycle (TCA), coupling the hydrolysis of succinyl-CoA to the synthesis of either ATP or GTP and thus represents the only step of substrate-level phosphorylation in the TCA. The beta subunit provides nucleotide specificity of the enzyme and binds the substrate succinate, while the binding sites for coenzyme A and phosphate are found in the alpha subunit. This is Succinate--CoA ligase [ADP-forming] subunit beta from Bacillus cereus (strain G9842).